The primary structure comprises 449 residues: Glucose-6-phosphate isomerase (449 aa).

The Proton donor role is filled by Glu291. Active-site residues include His312 and Lys426.

It belongs to the GPI family.

The protein localises to the cytoplasm. The enzyme catalyses alpha-D-glucose 6-phosphate = beta-D-fructose 6-phosphate. Its pathway is carbohydrate biosynthesis; gluconeogenesis. It functions in the pathway carbohydrate degradation; glycolysis; D-glyceraldehyde 3-phosphate and glycerone phosphate from D-glucose: step 2/4. Its function is as follows. Catalyzes the reversible isomerization of glucose-6-phosphate to fructose-6-phosphate. In Streptococcus pneumoniae (strain CGSP14), this protein is Glucose-6-phosphate isomerase.